The primary structure comprises 294 residues: Glutamyl-Q tRNA(Asp) synthetase (294 aa).

L-glutamate is bound by residues 8–12 (RFAPT) and Glu44. The 'HIGH' region motif lies at 11–21 (PTPSGYLHFGS). 4 residues coordinate Zn(2+): Cys100, Cys102, Tyr114, and Cys118. L-glutamate-binding residues include Tyr171 and Arg189. A 'KMSKS' region motif is present at residues 227-231 (KLGKS). Residue Lys230 participates in ATP binding.

It belongs to the class-I aminoacyl-tRNA synthetase family. GluQ subfamily. Zn(2+) is required as a cofactor.

In terms of biological role, catalyzes the tRNA-independent activation of glutamate in presence of ATP and the subsequent transfer of glutamate onto a tRNA(Asp). Glutamate is transferred on the 2-amino-5-(4,5-dihydroxy-2-cyclopenten-1-yl) moiety of the queuosine in the wobble position of the QUC anticodon. This is Glutamyl-Q tRNA(Asp) synthetase from Ectopseudomonas mendocina (strain ymp) (Pseudomonas mendocina).